A 778-amino-acid polypeptide reads, in one-letter code: Endonuclease MutS2 (778 aa).

328 to 335 (GPNTGGKT) contacts ATP. A Smr domain is found at 702 to 777 (LDLRGKRYEE…GSGATIVTFK (76 aa)).

It belongs to the DNA mismatch repair MutS family. MutS2 subfamily. As to quaternary structure, homodimer. Binds to stalled ribosomes, contacting rRNA.

Its function is as follows. Endonuclease that is involved in the suppression of homologous recombination and thus may have a key role in the control of bacterial genetic diversity. Acts as a ribosome collision sensor, splitting the ribosome into its 2 subunits. Detects stalled/collided 70S ribosomes which it binds and splits by an ATP-hydrolysis driven conformational change. Acts upstream of the ribosome quality control system (RQC), a ribosome-associated complex that mediates the extraction of incompletely synthesized nascent chains from stalled ribosomes and their subsequent degradation. Probably generates substrates for RQC. In Streptococcus pneumoniae serotype 19F (strain G54), this protein is Endonuclease MutS2.